A 135-amino-acid polypeptide reads, in one-letter code: Small ribosomal subunit protein uS12 (135 aa).

Asp89 is modified (3-methylthioaspartic acid). The segment at 106-135 (GVANRRQSRSKYGAKRPKAGAAQATKGGKK) is disordered. Positions 111 to 123 (RQSRSKYGAKRPK) are enriched in basic residues. The span at 124–135 (AGAAQATKGGKK) shows a compositional bias: low complexity.

This sequence belongs to the universal ribosomal protein uS12 family. As to quaternary structure, part of the 30S ribosomal subunit. Contacts proteins S8 and S17. May interact with IF1 in the 30S initiation complex.

With S4 and S5 plays an important role in translational accuracy. Functionally, interacts with and stabilizes bases of the 16S rRNA that are involved in tRNA selection in the A site and with the mRNA backbone. Located at the interface of the 30S and 50S subunits, it traverses the body of the 30S subunit contacting proteins on the other side and probably holding the rRNA structure together. The combined cluster of proteins S8, S12 and S17 appears to hold together the shoulder and platform of the 30S subunit. The polypeptide is Small ribosomal subunit protein uS12 (Hydrogenobaculum sp. (strain Y04AAS1)).